Reading from the N-terminus, the 447-residue chain is Phosphoglucosamine mutase (447 aa).

The Phosphoserine intermediate role is filled by Ser102. The Mg(2+) site is built by Ser102, Asp241, Asp243, and Asp245. Ser102 bears the Phosphoserine mark.

Belongs to the phosphohexose mutase family. Mg(2+) is required as a cofactor. Activated by phosphorylation.

The catalysed reaction is alpha-D-glucosamine 1-phosphate = D-glucosamine 6-phosphate. Functionally, catalyzes the conversion of glucosamine-6-phosphate to glucosamine-1-phosphate. This is Phosphoglucosamine mutase from Pseudomonas syringae pv. syringae (strain B728a).